A 734-amino-acid chain; its full sequence is E3 ubiquitin-protein ligase TRIM56 (734 aa).

An RING-type zinc finger spans residues 21–60 (CKICLEQLHTPKTLPCLHTYCQDCLAQLDIGGQVRCPECR). 2 consecutive B box-type zinc fingers follow at residues 98–149 (KPTC…VVDL) and 164–205 (RQAS…CLPL). Positions 169, 172, 192, and 197 each coordinate Zn(2+). Residues 215-303 (GLEELLAGVD…KIERQEQVAK (89 aa)) are a coiled coil. The segment covering 372–381 (EPKQSPKDSG) has biased composition (basic and acidic residues). Positions 372–463 (EPKQSPKDSG…SPILRPNLEG (92 aa)) are disordered. Positions 435-448 (RPNKKKKCKGRGKS) are enriched in basic residues. Residue S454 is modified to Phosphoserine.

The protein belongs to the TRIM/RBCC family. As to quaternary structure, interacts with STING1. Interacts with TICAM1.

Its subcellular location is the cytoplasm. It catalyses the reaction S-ubiquitinyl-[E2 ubiquitin-conjugating enzyme]-L-cysteine + [acceptor protein]-L-lysine = [E2 ubiquitin-conjugating enzyme]-L-cysteine + N(6)-ubiquitinyl-[acceptor protein]-L-lysine.. It participates in protein modification; protein ubiquitination. In terms of biological role, E3 ubiquitin-protein ligase that plays a key role in innate antiviral immunity by mediating ubiquitination of CGAS and STING1. In response to pathogen- and host-derived double-stranded DNA (dsDNA), targets STING1 to 'Lys-63'-linked ubiquitination, thereby promoting its homodimerization, a step required for the production of type I interferon IFN-beta. Also mediates monoubiquitination of CGAS, thereby promoting CGAS oligomerization and subsequent activation. Independently of its E3 ubiquitin ligase activity, positive regulator of TLR3 signaling. Potentiates extracellular double stranded RNA (dsRNA)-induced expression of IFNB1 and interferon-stimulated genes ISG15, IFIT1/ISG56, CXCL10, OASL and CCL5/RANTES. The chain is E3 ubiquitin-protein ligase TRIM56 from Mus musculus (Mouse).